The primary structure comprises 132 residues: Large ribosomal subunit protein uL14 (132 aa).

It belongs to the universal ribosomal protein uL14 family. As to quaternary structure, part of the 50S ribosomal subunit. Forms a cluster with proteins L3 and L24e, part of which may contact the 16S rRNA in 2 intersubunit bridges.

Binds to 23S rRNA. Forms part of two intersubunit bridges in the 70S ribosome. This chain is Large ribosomal subunit protein uL14, found in Methanococcus vannielii.